The sequence spans 1364 residues: ABC-type transporter cns4 (1364 aa).

Residues 42–290 form the ABC transporter 1 domain; it reads SRVKESRAKP…MEEMGFLYTD (249 aa). N-linked (GlcNAc...) asparagine glycosylation is found at Asn-152 and Asn-214. Helical transmembrane passes span 435–455, 483–503, 508–528, 540–560, and 567–587; these read LFFA…GSFA, IPLI…MTGL, EAFL…TALF, AAIK…GFLI, and PWLG…AVLS. The N-linked (GlcNAc...) asparagine glycan is linked to Asn-610. The helical transmembrane segment at 650 to 670 threads the bilayer; sequence FAIVWVWWALFVILTVYFTSN. N-linked (GlcNAc...) asparagine glycosylation is found at Asn-689, Asn-711, and Asn-739. Residues 697–732 are disordered; that stretch reads DEEVGSGPDSHDSRNRSGISPIGDKQETSTDGPSKI. An ABC transporter 2 domain is found at 737–985; the sequence is IRNTSVFTWK…TVNEYFGRNG (249 aa). 779–786 is a binding site for ATP; it reads GSSGAGKT. 6 consecutive transmembrane segments (helical) span residues 1076–1094, 1105–1125, 1146–1166, 1185–1205, 1211–1231, and 1245–1265; these read LMLH…WKIG, FTIF…QPLF, AFAT…AVVY, AVFF…QAIA, AIFA…FCGV, and WLYY…FTTF.

This sequence belongs to the ABC transporter superfamily. ABCG family. PDR (TC 3.A.1.205) subfamily.

Its subcellular location is the cell membrane. In terms of biological role, ABC-type transporter; part of the gene cluster that mediates the biosynthesis of cordycepin (COR) and pentostatin (PTN), two adenosine analogs with related bioactivity profiles as both mimic adenosine and can inhibit some of the processes that are adenosine dependent. Mediates the pumping of pentostatin but not of cordycepin out of fungal cells. Decreasing intracellular pentostatin releases adenosine deaminase (ADA) inhibition, allowing ADA to deaminate cordycepin into non-toxic 3'-d. The chain is ABC-type transporter cns4 from Cordyceps militaris (strain CM01) (Caterpillar fungus).